A 37-amino-acid chain; its full sequence is Large ribosomal subunit protein bL36 (37 aa).

Belongs to the bacterial ribosomal protein bL36 family.

The polypeptide is Large ribosomal subunit protein bL36 (Salinispora tropica (strain ATCC BAA-916 / DSM 44818 / JCM 13857 / NBRC 105044 / CNB-440)).